We begin with the raw amino-acid sequence, 85 residues long: Small ribosomal subunit protein uS17 (85 aa).

The protein belongs to the universal ribosomal protein uS17 family. In terms of assembly, part of the 30S ribosomal subunit.

In terms of biological role, one of the primary rRNA binding proteins, it binds specifically to the 5'-end of 16S ribosomal RNA. The chain is Small ribosomal subunit protein uS17 from Syntrophus aciditrophicus (strain SB).